A 174-amino-acid polypeptide reads, in one-letter code: Shikimate kinase 2 (174 aa).

12 to 17 (GCGKTT) provides a ligand contact to ATP. Positions 16 and 32 each coordinate Mg(2+). Positions 34, 58, and 79 each coordinate substrate. The tract at residues 112-126 (EAYPLADQRPTLTGR) is LID domain. An ATP-binding site is contributed by R120. Substrate is bound at residue R139. Q155 lines the ATP pocket.

Belongs to the shikimate kinase family. AroL subfamily. Monomer. Mg(2+) is required as a cofactor.

The protein resides in the cytoplasm. The catalysed reaction is shikimate + ATP = 3-phosphoshikimate + ADP + H(+). The protein operates within metabolic intermediate biosynthesis; chorismate biosynthesis; chorismate from D-erythrose 4-phosphate and phosphoenolpyruvate: step 5/7. Catalyzes the specific phosphorylation of the 3-hydroxyl group of shikimic acid using ATP as a cosubstrate. This is Shikimate kinase 2 from Erwinia tasmaniensis (strain DSM 17950 / CFBP 7177 / CIP 109463 / NCPPB 4357 / Et1/99).